The chain runs to 354 residues: Muscleblind-like protein 3 (354 aa).

4 C3H1-type zinc fingers span residues Trp14–Arg42, Asn48–Pro74, Ser174–Asp202, and Asp210–Ala236.

This sequence belongs to the muscleblind family. As to expression, highly expressed in the placenta.

It is found in the nucleus. The protein localises to the cytoplasm. In terms of biological role, mediates pre-mRNA alternative splicing regulation. Acts either as activator or repressor of splicing on specific pre-mRNA targets. Inhibits cardiac troponin-T (TNNT2) pre-mRNA exon inclusion but induces insulin receptor (IR) pre-mRNA exon inclusion in muscle. Antagonizes the alternative splicing activity pattern of CELF proteins. May play a role in myotonic dystrophy pathophysiology (DM). Could inhibit terminal muscle differentiation, acting at approximately the time of myogenin induction. This Homo sapiens (Human) protein is Muscleblind-like protein 3 (MBNL3).